Here is a 736-residue protein sequence, read N- to C-terminus: Oxysterol-binding protein-related protein 9 (736 aa).

Residue alanine 2 is modified to N-acetylalanine. Residues 2-99 (ASIMEGPLSK…WIHALEETIL (98 aa)) enclose the PH domain. The interval 231–367 (KSEQRPSSLP…DRDDDAEAGS (137 aa)) is disordered. The segment covering 253–290 (TPTPNSTGSGHSPPSSSLTSPSHVNLSPNTVPEFSYSS) has biased composition (low complexity). Phosphoserine occurs at positions 306, 324, 325, 326, and 329. Polar residues-rich tracts occupy residues 314–329 (SSGS…SGNS) and 336–347 (TESLNSSLSNGT). At serine 611 the chain carries Phosphoserine.

The protein belongs to the OSBP family. In terms of assembly, heterodimer with OSBPL11. Interacts with OSBPL10. Widely expressed.

Its subcellular location is the late endosome membrane. It localises to the golgi apparatus. The protein localises to the trans-Golgi network membrane. It catalyses the reaction a 1,2-diacyl-sn-glycero-3-phospho-(1D-myo-inositol 4-phosphate)(out) + a 1,2-diacyl-sn-glycero-3-phospho-L-serine(in) = a 1,2-diacyl-sn-glycero-3-phospho-(1D-myo-inositol 4-phosphate)(in) + a 1,2-diacyl-sn-glycero-3-phospho-L-serine(out). In terms of biological role, interacts with OSBPL11 to function as lipid transfer proteins. Together they form a heterodimer that localizes at the ER-trans-Golgi membrane contact sites, and exchanges phosphatidylserine (1,2-diacyl-sn-glycero-3-phospho-L-serine, PS) for phosphatidylinositol-4-phosphate (1,2-diacyl-sn-glycero-3-phospho-(1D-myo-inositol 4-phosphate), PI(4)P) between the two organelles, a step that is critical for sphingomyelin synthesis in the Golgi complex. This is Oxysterol-binding protein-related protein 9 (OSBPL9) from Homo sapiens (Human).